The primary structure comprises 365 residues: MLRTRLIQAASSAQRAFSTSQKALAAKQMTVRDALNSALDDELARDDRVFILGEEVAQYDGAYKVSRGLWKKYGDKRVIDTPITEMGFAGIAVGAAMAGLRPVCEFMTWNFSMQAIDHIINSAAKTFYMSAGAVNVPIVFRGPNGAASGVAAQHSQCFAAWYAHCPGLKVLSPYDAEDARGLLKSAIRDPDPVVFLENELVYGTAFPVADNVADKDFLVPIGKAKVMRPGKDITLVAHSKAVETSLLAAAELAKKGIEAEVINLRSIRPLDTATIFASVRKTHHLVTVENGWPQHGVGAEICARIMEDQTFFELDAPVWRCAGVDVPMPYAKTLEAHALPRVQDLVEATLKVLGGKVGKAAAANK.

The N-terminal 24 residues, 1 to 24 (MLRTRLIQAASSAQRAFSTSQKAL), are a transit peptide targeting the mitochondrion. Residue E85 participates in thiamine diphosphate binding. K(+)-binding residues include I138, A186, I187, and D189.

Thiamine diphosphate is required as a cofactor. As to expression, expressed in salivary glands (at protein level).

Its subcellular location is the mitochondrion matrix. The catalysed reaction is N(6)-[(R)-lipoyl]-L-lysyl-[protein] + pyruvate + H(+) = N(6)-[(R)-S(8)-acetyldihydrolipoyl]-L-lysyl-[protein] + CO2. Functionally, the pyruvate dehydrogenase complex catalyzes the overall conversion of pyruvate to acetyl-CoA and CO(2). Might play a role in regulating synapse structure formation at neuromuscular junctions. Might play a role in maintenance of mitochondrial morphology. The chain is Pyruvate dehydrogenase E1 component subunit beta, mitochondrial from Drosophila melanogaster (Fruit fly).